Reading from the N-terminus, the 118-residue chain is Putative pterin-4-alpha-carbinolamine dehydratase (118 aa).

The protein belongs to the pterin-4-alpha-carbinolamine dehydratase family.

It carries out the reaction (4aS,6R)-4a-hydroxy-L-erythro-5,6,7,8-tetrahydrobiopterin = (6R)-L-erythro-6,7-dihydrobiopterin + H2O. The chain is Putative pterin-4-alpha-carbinolamine dehydratase from Xanthomonas oryzae pv. oryzae (strain MAFF 311018).